The primary structure comprises 301 residues: Protein SCO1 homolog, mitochondrial (301 aa).

The N-terminal 67 residues, 1-67 (MAMLVLVPGR…PGYCLGTRPL (67 aa)), are a transit peptide targeting the mitochondrion. The interval 63 to 91 (GTRPLSTARPPPPWSQKGPGDSTRPSKPG) is disordered. Residues 68-92 (STARPPPPWSQKGPGDSTRPSKPGP) are Mitochondrial matrix-facing. The helical transmembrane segment at 93 to 111 (VSWKSLAITFAIGGALLAG) threads the bilayer. Residues 112–301 (MKHVKKEKAE…THMRPYRKKS (190 aa)) lie on the Mitochondrial intermembrane side of the membrane. Positions 118 to 131 (EKAEKLEKERQRHI) are important for dimerization. Positions 169, 173, and 260 each coordinate Cu cation. A disulfide bond links Cys169 and Cys173.

It belongs to the SCO1/2 family. Homodimer. Interacts with COA6. Found in a complex with TMEM177, COX20, COA6, MT-CO2/COX2, COX18 and SCO2. Interacts with TMEM177 in a COX20-dependent manner. Interacts with COX20 in a MT-CO2/COX2- and COX18-dependent manner. Interacts with COX16. In terms of tissue distribution, predominantly expressed in tissues characterized by high rates of oxidative phosphorylation (OxPhos), including muscle, heart, and brain.

It localises to the mitochondrion. Its subcellular location is the mitochondrion inner membrane. Copper metallochaperone essential for the maturation of cytochrome c oxidase subunit II (MT-CO2/COX2). Not required for the synthesis of MT-CO2/COX2 but plays a crucial role in stabilizing MT-CO2/COX2 during its subsequent maturation. Involved in transporting copper to the Cu(A) site on MT-CO2/COX2. Plays an important role in the regulation of copper homeostasis by controlling the abundance and cell membrane localization of copper transporter CTR1. The sequence is that of Protein SCO1 homolog, mitochondrial (SCO1) from Homo sapiens (Human).